The sequence spans 307 residues: Mitochondrial glycine transporter (307 aa).

Solcar repeat units follow at residues 8–87 (PRNS…MRSS), 115–199 (LTMY…SKQL), and 221–305 (TSTT…LVKR). The next 6 membrane-spanning stretches (helical) occupy residues 14 to 39 (LIGG…TRIQ), 62 to 88 (GTLP…RSSL), 121 to 146 (LLTG…VRYE), 174 to 197 (GFGA…EKSK), 225 to 251 (VNTT…KTRM), and 280 to 298 (GLSM…AWGI).

The protein belongs to the mitochondrial carrier (TC 2.A.29) family. SLC25A38 subfamily.

The protein resides in the mitochondrion. The protein localises to the mitochondrion inner membrane. The enzyme catalyses glycine(in) = glycine(out). Its function is as follows. Mitochondrial glycine transporter that imports glycine into the mitochondrial matrix. Plays an important role in providing glycine for the first enzymatic step in heme biosynthesis, the condensation of glycine with succinyl-CoA to produce 5-aminolevulinate (ALA) in the mitochondrial matrix. The sequence is that of Mitochondrial glycine transporter from Saccharomyces cerevisiae (strain ATCC 204508 / S288c) (Baker's yeast).